A 237-amino-acid polypeptide reads, in one-letter code: MVFSFSTFNRLVTFTVMAAIVSVRPLTAEDLSSQQQWPGTPLSRVEALAVLQTLNANLLSNASATLTLDRWCEAHRLAPPGSKIVAKHVQGHDKPANVHIRKLLHVGPNEPIVYRHVRLACGDRILSEADNWYVPARLTAEMNEVLNTTDISFGRAVRSLNFTRTNLTARLLWSPLPEGWDMSAELPVSSSGPLIPPPFLLEHHAVLKLQDGTPFSAVVESYTNNVLDFPAPLLYPQ.

A signal peptide spans 1–28 (MVFSFSTFNRLVTFTVMAAIVSVRPLTA).

This is an uncharacterized protein from Sinorhizobium fredii (strain NBRC 101917 / NGR234).